A 421-amino-acid polypeptide reads, in one-letter code: Protein OS-9 homolog (421 aa).

The first 26 residues, Met-1–Thr-26, serve as a signal peptide directing secretion. One can recognise an MRH domain in the interval Glu-99–Leu-220. An a mannooligosaccharide derivative-binding site is contributed by Trp-115. A glycan (N-linked (GlcNAc...) asparagine) is linked at Asn-125. Disulfide bonds link Cys-173–Cys-206 and Cys-188–Cys-218. A mannooligosaccharide derivative contacts are provided by Arg-180, Glu-202, and Tyr-208. Residues Asn-271 and Asn-332 are each glycosylated (N-linked (GlcNAc...) asparagine). The segment covering Gly-375–Glu-394 has biased composition (acidic residues). The segment at Gly-375–Ala-403 is disordered.

It belongs to the OS-9 family. As to quaternary structure, interacts with missfolded ER lumenal proteins.

It localises to the endoplasmic reticulum membrane. Lectin involved in the quality control of the secretory pathway. As a member of the endoplasmic reticulum-associated degradation lumenal (ERAD-L) surveillance system, targets misfolded endoplasmic reticulum lumenal glycoproteins for degradation. In Eremothecium gossypii (strain ATCC 10895 / CBS 109.51 / FGSC 9923 / NRRL Y-1056) (Yeast), this protein is Protein OS-9 homolog (YOS9).